The primary structure comprises 277 residues: Shikimate dehydrogenase (NADP(+)) (277 aa).

Shikimate contacts are provided by residues 15–17 (SLS) and threonine 62. The active-site Proton acceptor is the lysine 66. 2 residues coordinate shikimate: asparagine 87 and aspartate 102. NADP(+)-binding positions include 127–131 (GAGGA), 151–156 (NRTVDK), and isoleucine 219. Tyrosine 221 contacts shikimate. An NADP(+)-binding site is contributed by glycine 242.

It belongs to the shikimate dehydrogenase family. As to quaternary structure, homodimer.

The catalysed reaction is shikimate + NADP(+) = 3-dehydroshikimate + NADPH + H(+). Its pathway is metabolic intermediate biosynthesis; chorismate biosynthesis; chorismate from D-erythrose 4-phosphate and phosphoenolpyruvate: step 4/7. Its function is as follows. Involved in the biosynthesis of the chorismate, which leads to the biosynthesis of aromatic amino acids. Catalyzes the reversible NADPH linked reduction of 3-dehydroshikimate (DHSA) to yield shikimate (SA). This is Shikimate dehydrogenase (NADP(+)) from Bacillus cereus (strain ATCC 10987 / NRS 248).